The primary structure comprises 124 residues: Biogenesis of lysosome-related organelles complex 1 subunit CNL1 (124 aa).

The tract at residues 1-20 (MMSENITAVEPQENNDVEAD) is disordered. The stretch at 75 to 98 (IGMAKDLLQKCDDLEKHYDQLDAV) forms a coiled coil.

It belongs to the BLOC1S4 family. In terms of assembly, component of the biogenesis of lysosome-related organelles complex-1 (BLOC-1).

The protein resides in the cytoplasm. In terms of biological role, component of the biogenesis of lysosome-related organelles complex-1 (BLOC-1), a complex that is involved in endosomal cargo sorting. This is Biogenesis of lysosome-related organelles complex 1 subunit CNL1 (CLN1) from Kluyveromyces lactis (strain ATCC 8585 / CBS 2359 / DSM 70799 / NBRC 1267 / NRRL Y-1140 / WM37) (Yeast).